The sequence spans 237 residues: 2,3-bisphosphoglycerate-dependent phosphoglycerate mutase (237 aa).

Substrate contacts are provided by residues 8–15, 21–22, R60, 87–90, K98, 114–115, and 180–181; these read RHGQSQWN, TG, ERHY, RR, and GN. The active-site Tele-phosphohistidine intermediate is the H9. E87 acts as the Proton donor/acceptor in catalysis.

The protein belongs to the phosphoglycerate mutase family. BPG-dependent PGAM subfamily. Homodimer.

The enzyme catalyses (2R)-2-phosphoglycerate = (2R)-3-phosphoglycerate. Its pathway is carbohydrate degradation; glycolysis; pyruvate from D-glyceraldehyde 3-phosphate: step 3/5. In terms of biological role, catalyzes the interconversion of 2-phosphoglycerate and 3-phosphoglycerate. The sequence is that of 2,3-bisphosphoglycerate-dependent phosphoglycerate mutase from Caulobacter vibrioides (strain ATCC 19089 / CIP 103742 / CB 15) (Caulobacter crescentus).